Reading from the N-terminus, the 556-residue chain is 2-isopropylmalate synthase (556 aa).

Positions proline 33–aspartate 307 constitute a Pyruvate carboxyltransferase domain. Mg(2+) is bound by residues aspartate 42, histidine 246, histidine 248, and asparagine 282. The regulatory domain stretch occupies residues alanine 439–alanine 556.

The protein belongs to the alpha-IPM synthase/homocitrate synthase family. LeuA type 2 subfamily. As to quaternary structure, homodimer. The cofactor is Mg(2+).

Its subcellular location is the cytoplasm. The enzyme catalyses 3-methyl-2-oxobutanoate + acetyl-CoA + H2O = (2S)-2-isopropylmalate + CoA + H(+). It functions in the pathway amino-acid biosynthesis; L-leucine biosynthesis; L-leucine from 3-methyl-2-oxobutanoate: step 1/4. Catalyzes the condensation of the acetyl group of acetyl-CoA with 3-methyl-2-oxobutanoate (2-ketoisovalerate) to form 3-carboxy-3-hydroxy-4-methylpentanoate (2-isopropylmalate). The polypeptide is 2-isopropylmalate synthase (Stutzerimonas stutzeri (strain A1501) (Pseudomonas stutzeri)).